Here is a 390-residue protein sequence, read N- to C-terminus: Magnesium-protoporphyrin IX monomethyl ester [oxidative] cyclase (390 aa).

The protein belongs to the AcsF family. Fe cation serves as cofactor.

It catalyses the reaction Mg-protoporphyrin IX 13-monomethyl ester + 3 NADPH + 3 O2 + 2 H(+) = 3,8-divinyl protochlorophyllide a + 3 NADP(+) + 5 H2O. It participates in porphyrin-containing compound metabolism; chlorophyll biosynthesis (light-independent). Catalyzes the formation of the isocyclic ring in chlorophyll biosynthesis. Mediates the cyclase reaction, which results in the formation of divinylprotochlorophyllide (Pchlide) characteristic of all chlorophylls from magnesium-protoporphyrin IX 13-monomethyl ester (MgPMME). In Prochlorococcus marinus subsp. pastoris (strain CCMP1986 / NIES-2087 / MED4), this protein is Magnesium-protoporphyrin IX monomethyl ester [oxidative] cyclase.